Reading from the N-terminus, the 264-residue chain is Rhodanese-like domain-containing protein 4A, chloroplastic (264 aa).

The transit peptide at 1–60 (MTSLPIILASSPLRNLTKPCSTSQIPKPIQNSTKQPPIHLLTKTNLSVTISQLIITSPVL) directs the protein to the chloroplast. The helical transmembrane segment at 95–115 (FFVAGCTFTYLVVYPAVMFYL) threads the bilayer. Residues 132 to 232 (NESDSQLLDI…ARGKNGWLAI (101 aa)) enclose the Rhodanese domain.

It localises to the plastid. The protein localises to the chloroplast. It is found in the membrane. This is Rhodanese-like domain-containing protein 4A, chloroplastic (STR4A) from Arabidopsis thaliana (Mouse-ear cress).